A 228-amino-acid chain; its full sequence is MVVEDTPKSIITDDQITTNPNRVIEDDNNLEEGEILDEDDSSATSKPVVHQPHLLENSWTFLFDTPAAKSKQDDWGSSMRPIYTFSTVEEFWSIYNNIHHPGKLAVRADFYCFKHKIEPKWEDPICANGGKWTANYPKGKSDTSWLYTLLAMIGEQFDHGDEICGAVVKVRGRAEKISIWTKNASNEAAQVSIGKQWKEFLDYNETMGFIFHDDARKLDRNAKNKYVV.

EIF4G-binding stretches follow at residues His53 to Glu56 and Phe63 to His99. Residues Lys71–Gly76, Lys103, and Trp121–Glu122 each bind mRNA. A disulfide bond links Cys126 and Cys164. The segment at Tyr147–Gln156 is EIF4G-binding. MRNA-binding positions include Arg171–Lys176 and Arg216–Arg220.

Belongs to the eukaryotic initiation factor 4E family. In terms of assembly, EIF4F is a multi-subunit complex, the composition of which varies with external and internal environmental conditions. It is composed of at least EIF4A, EIF4E and EIF4G. EIF4E is also known to interact with other partners. In higher plants two isoforms of EIF4F have been identified, named isoform EIF4F and isoform EIF(iso)4F. Isoform EIF4F has subunits p220 and p26, whereas isoform EIF(iso)4F has subunits p82 and p28. As to quaternary structure, (Microbial infection) Interacts with potyvirus viral genome-linked protein (VPg); this interaction is possible in susceptible hosts but impaired in resistant plants. In terms of processing, according to the redox status, the Cys-126-Cys-164 disulfide bridge may have a role in regulating protein function by affecting its ability to bind capped mRNA.

It localises to the nucleus. Its subcellular location is the cytoplasm. Functionally, component of the protein complex eIF4F, which is involved in the recognition of the mRNA cap, ATP-dependent unwinding of 5'-terminal secondary structure and recruitment of mRNA to the ribosome. Recognizes and binds the 7-methylguanosine-containing mRNA cap during an early step in the initiation of protein synthesis and facilitates ribosome binding by inducing the unwinding of the mRNAs secondary structures. Key component of recessive resistance to potyviruses. In terms of biological role, (Microbial infection) Susceptibility host factor required for viral infection by recruiting viral RNAs to the host ribosomal complex via an interaction with viral genome-linked protein (VPg). Also seems to be involved in virus movement from cell-to-cell. This is Eukaryotic translation initiation factor 4E-1 from Pisum sativum (Garden pea).